Reading from the N-terminus, the 562-residue chain is Tripeptidyl-peptidase 1 (562 aa).

An N-terminal signal peptide occupies residues 1 to 19 (MGLQARLLGLLALVIAGKC). The propeptide at 20–194 (TYNPEPDQRW…PEPQQVGTVS (175 aa)) is removed in mature form. An intrachain disulfide couples C111 to C122. Residues 198–562 (GVTPSVLRQR…PALLKTLLNP (365 aa)) form the Peptidase S53 domain. The N-linked (GlcNAc...) asparagine glycan is linked to N209. N221 carries N-linked (GlcNAc...) (high mannose) asparagine glycosylation. Active-site charge relay system residues include E271 and D275. N285, N312, and N442 each carry an N-linked (GlcNAc...) asparagine glycan. Disulfide bonds link C364–C525 and C521–C536. The active-site Charge relay system is S474. Ca(2+) is bound by residues D516 and V517. Residues G538, G540, and D542 each contribute to the Ca(2+) site.

In terms of assembly, monomer. Interacts with CLN5. Interacts with CLN3. Ca(2+) is required as a cofactor. Post-translationally, activated by autocatalytic proteolytical processing upon acidification. N-glycosylation is required for processing and activity.

The protein localises to the lysosome. Its subcellular location is the melanosome. It catalyses the reaction Release of an N-terminal tripeptide from a polypeptide, but also has endopeptidase activity.. Functionally, lysosomal serine protease with tripeptidyl-peptidase I activity. May act as a non-specific lysosomal peptidase which generates tripeptides from the breakdown products produced by lysosomal proteinases. Requires substrates with an unsubstituted N-terminus. The polypeptide is Tripeptidyl-peptidase 1 (Tpp1) (Mus musculus (Mouse)).